We begin with the raw amino-acid sequence, 130 residues long: kinetoplast-associated protein 2-2 (130 aa).

A propeptide spanning residues 1 to 10 (MLRRTVSNFA) is cleaved from the precursor. Residues 95–130 (ETKQAQRAKAQKAQKKPKSAKSKVKKAAKKAKKSKK) form a disordered region. The span at 103–130 (KAQKAQKKPKSAKSKVKKAAKKAKKSKK) shows a compositional bias: basic residues.

This sequence belongs to the KAP family. Associates with the kinetoplast DNA network.

Its subcellular location is the mitochondrion matrix. The protein localises to the kinetoplast. Functionally, histone H1-like DNA-binding protein involved in the organization and segregation of kinetoplast DNA (kDNA). The mitochondrial DNA of kinetoplastid protozoa consists of about 5,000 minicircles and 20 to 30 maxicircles. These circular DNAs are held together by catenation into a highly organized compact disk structure referred to as a kinetoplast DNA (kDNA) network. Binds preferentially to a specific fragment of minicircle DNA and is able to compact kDNA networks through DNA charge neutralization and condensation. This chain is kinetoplast-associated protein 2-2 (KAP2-2), found in Crithidia fasciculata.